Consider the following 1096-residue polypeptide: MPKRDDINSVLVIGSGPIVIGQAAEFDYSGTQACRVLREEGVRVILVNSNPATIMTDPGFADATYIEPITSEVLEKIIIKERPDAVLPTLGGQTALNAAIRLDELGILAKHGVELIGAKVEAIQKGEDRQLFKDLVIESGADVARSHVAKTLEQAVEFAEDLGYPLVIRPSFTMGGLGSGFAHTRQELERMVADGLQSSPTTEVLLEESILGWKEYELELMRDTADNTVVVCSIENVDPVGVHTGDSITVAPALTLTDREYQHMRDIGIDIIRRVGVDTGGCNIQFAVDPTNGRLIVIEMNPRVSRSSALASKATGFPIAKIAAKLAIGYRLDEIPNDITKVTPASFEPTLDYVVVKVPRFAFEKFPAADAELTTTMKSVGEAMAIGRNYSTALQKALRSLEKRGSSFHWGAESRSVEELLETSRIPTDGRIVTVQQALRAGATPEQVFDATKIDPWFIDQIVLINEVADAVRDADELDAPTLREAKDHGFSDAQIAEIRGIGEQEVRDARHAAGIRPVFKTVDTCAGEFPALTPYHYSSYDSETEIVPSDRRKVIILGSGPNRIGQGIEFDYSCVHASFALADAGFETIMINCNPETVSTDYDTSDRLYFEPLTLEDVLEIVHVEQQAGELVGVVVQLGGQTALGLAKGLEAAGVPILGTSPSAIDLAEERGLFSGILDAAGLVAPRNGTAVAIDEAVVVAEEIGYPVLVRPSYVLGGRGMEIVFDTATLHDYFLRMADQGIIGEGKPLLIDRFLDDAIEIDIDAIYDGTELYVGGVMEHIEEAGIHSGDSSCTLPPVTLGRGQIQQVVDATRAIAEGVGVRGLLNVQFAIGAGVLYVLEANPRASRTVPFVSKALGIPLAKAASLVMVGTSIAELKASGLLPERDGSDVPMDSPVAVKEAVLPFKRFRTKDGLIVDSVLGPEMRSTGEVMGIDRDFPRAFAKSQEAAFGGLPLSGTVFVSVADRDKRSIVLPVLRLQQLGFEVLATAGTAEILSRNGIQARVVRKYSEEPAAGDSPSIVDLINRDEVDVVINTPSGRTARADGYEIRAAAVAADKPLFTTIAQLTAAVASFDAIRAGFDVTSLQDYAIAREARR.

The segment at 1–402 is carboxyphosphate synthetic domain; the sequence is MPKRDDINSV…ALQKALRSLE (402 aa). ATP is bound by residues arginine 129, arginine 169, glycine 175, glycine 176, glutamate 208, isoleucine 210, glutamate 215, glycine 241, valine 242, histidine 243, glutamine 285, and glutamate 299. The 196-residue stretch at 133 to 328 folds into the ATP-grasp 1 domain; that stretch reads KDLVIESGAD…IAKIAAKLAI (196 aa). Mg(2+)-binding residues include glutamine 285, glutamate 299, and asparagine 301. Residues glutamine 285, glutamate 299, and asparagine 301 each coordinate Mn(2+). Positions 403–547 are oligomerization domain; that stretch reads KRGSSFHWGA…YSSYDSETEI (145 aa). Positions 548-950 are carbamoyl phosphate synthetic domain; sequence VPSDRRKVII…AFAKSQEAAF (403 aa). The ATP-grasp 2 domain occupies 676-870; it reads SGILDAAGLV…LAKAASLVMV (195 aa). The ATP site is built by arginine 712, arginine 754, leucine 756, glutamate 761, glycine 786, isoleucine 787, histidine 788, serine 789, glutamine 829, and glutamate 841. Glutamine 829, glutamate 841, and asparagine 843 together coordinate Mg(2+). Mn(2+) contacts are provided by glutamine 829, glutamate 841, and asparagine 843. The region spanning 951 to 1095 is the MGS-like domain; the sequence is GGLPLSGTVF…QDYAIAREAR (145 aa). The allosteric domain stretch occupies residues 951-1096; it reads GGLPLSGTVF…DYAIAREARR (146 aa).

It belongs to the CarB family. Composed of two chains; the small (or glutamine) chain promotes the hydrolysis of glutamine to ammonia, which is used by the large (or ammonia) chain to synthesize carbamoyl phosphate. Tetramer of heterodimers (alpha,beta)4. Requires Mg(2+) as cofactor. The cofactor is Mn(2+).

It carries out the reaction hydrogencarbonate + L-glutamine + 2 ATP + H2O = carbamoyl phosphate + L-glutamate + 2 ADP + phosphate + 2 H(+). The enzyme catalyses hydrogencarbonate + NH4(+) + 2 ATP = carbamoyl phosphate + 2 ADP + phosphate + 2 H(+). It functions in the pathway amino-acid biosynthesis; L-arginine biosynthesis; carbamoyl phosphate from bicarbonate: step 1/1. Its pathway is pyrimidine metabolism; UMP biosynthesis via de novo pathway; (S)-dihydroorotate from bicarbonate: step 1/3. In terms of biological role, large subunit of the glutamine-dependent carbamoyl phosphate synthetase (CPSase). CPSase catalyzes the formation of carbamoyl phosphate from the ammonia moiety of glutamine, carbonate, and phosphate donated by ATP, constituting the first step of 2 biosynthetic pathways, one leading to arginine and/or urea and the other to pyrimidine nucleotides. The large subunit (synthetase) binds the substrates ammonia (free or transferred from glutamine from the small subunit), hydrogencarbonate and ATP and carries out an ATP-coupled ligase reaction, activating hydrogencarbonate by forming carboxy phosphate which reacts with ammonia to form carbamoyl phosphate. This is Carbamoyl phosphate synthase large chain from Clavibacter sepedonicus (Clavibacter michiganensis subsp. sepedonicus).